The chain runs to 355 residues: S-adenosylmethionine:tRNA ribosyltransferase-isomerase (355 aa).

This sequence belongs to the QueA family. Monomer.

The protein localises to the cytoplasm. It catalyses the reaction 7-aminomethyl-7-carbaguanosine(34) in tRNA + S-adenosyl-L-methionine = epoxyqueuosine(34) in tRNA + adenine + L-methionine + 2 H(+). Its pathway is tRNA modification; tRNA-queuosine biosynthesis. Transfers and isomerizes the ribose moiety from AdoMet to the 7-aminomethyl group of 7-deazaguanine (preQ1-tRNA) to give epoxyqueuosine (oQ-tRNA). The sequence is that of S-adenosylmethionine:tRNA ribosyltransferase-isomerase from Burkholderia ambifaria (strain MC40-6).